A 296-amino-acid chain; its full sequence is MPELPEVEVVRRGLTPYVLGATITDVAVEHPRSIRTIEGGAAELIGSLQGREVTRIGRRGKFLWFELTGHGDYACGFPQQGLLVHLGMSGQMLIKTQNSALHPHRRIRTTIVRSDAQECFELWFVDQRTFGYWAPTTFVETAHGCVPEQITHIARDLLDPQLKRENLARLIRKKNSEIKRVLLNQEIVSGIGNIYADEMLWAARIHPQTPASHLSVAQLSNLLEHGQRVMNAALDQGGTSFDSLYVNVNGQSGYFDVSLHAYGQQGQACDRCGSNIIREKFANRSSHFCPRCQLMH.

P2 functions as the Schiff-base intermediate with DNA in the catalytic mechanism. The active-site Proton donor is the E3. K61 acts as the Proton donor; for beta-elimination activity in catalysis. The DNA site is built by H104, R128, and K174. An FPG-type zinc finger spans residues 260–294; that stretch reads HAYGQQGQACDRCGSNIIREKFANRSSHFCPRCQL. The active-site Proton donor; for delta-elimination activity is the R284.

Belongs to the FPG family. Monomer. Requires Zn(2+) as cofactor.

The enzyme catalyses Hydrolysis of DNA containing ring-opened 7-methylguanine residues, releasing 2,6-diamino-4-hydroxy-5-(N-methyl)formamidopyrimidine.. The catalysed reaction is 2'-deoxyribonucleotide-(2'-deoxyribose 5'-phosphate)-2'-deoxyribonucleotide-DNA = a 3'-end 2'-deoxyribonucleotide-(2,3-dehydro-2,3-deoxyribose 5'-phosphate)-DNA + a 5'-end 5'-phospho-2'-deoxyribonucleoside-DNA + H(+). Functionally, involved in base excision repair of DNA damaged by oxidation or by mutagenic agents. Acts as a DNA glycosylase that recognizes and removes damaged bases. Has a preference for oxidized purines, such as 7,8-dihydro-8-oxoguanine (8-oxoG). Has AP (apurinic/apyrimidinic) lyase activity and introduces nicks in the DNA strand. Cleaves the DNA backbone by beta-delta elimination to generate a single-strand break at the site of the removed base with both 3'- and 5'-phosphates. In Corynebacterium diphtheriae (strain ATCC 700971 / NCTC 13129 / Biotype gravis), this protein is Formamidopyrimidine-DNA glycosylase.